The sequence spans 284 residues: Nucleotide-binding protein NMB0738 (284 aa).

8–15 is an ATP binding site; it reads GLSGSGKS. 58 to 61 is a binding site for GTP; it reads DVRS.

It belongs to the RapZ-like family.

Displays ATPase and GTPase activities. The polypeptide is Nucleotide-binding protein NMB0738 (Neisseria meningitidis serogroup B (strain ATCC BAA-335 / MC58)).